The primary structure comprises 172 residues: Pollen-specific protein-like At4g18596 (172 aa).

The N-terminal stretch at Met1–Ala27 is a signal peptide. Disulfide bonds link Cys41-Cys112, Cys44-Cys157, and Cys65-Cys100. Asn70 carries an N-linked (GlcNAc...) asparagine glycan.

Belongs to the Ole e I family.

The protein localises to the secreted. This chain is Pollen-specific protein-like At4g18596, found in Arabidopsis thaliana (Mouse-ear cress).